Reading from the N-terminus, the 440-residue chain is Chromosome partition protein MukF (440 aa).

The segment at 208-236 (LSETSGTLRELQDTLEAAGDKLQANLLRI) is leucine-zipper.

This sequence belongs to the MukF family. Interacts, and probably forms a ternary complex, with MukE and MukB via its C-terminal region. The complex formation is stimulated by calcium or magnesium. It is required for an interaction between MukE and MukB.

It is found in the cytoplasm. It localises to the nucleoid. Its function is as follows. Involved in chromosome condensation, segregation and cell cycle progression. May participate in facilitating chromosome segregation by condensation DNA from both sides of a centrally located replisome during cell division. Not required for mini-F plasmid partitioning. Probably acts via its interaction with MukB and MukE. Overexpression results in anucleate cells. It has a calcium binding activity. This chain is Chromosome partition protein MukF, found in Yersinia enterocolitica serotype O:8 / biotype 1B (strain NCTC 13174 / 8081).